We begin with the raw amino-acid sequence, 376 residues long: Zinc transporter 7 (376 aa).

The Cytoplasmic segment spans residues 1–37 (MLPLSIKDDEYKPPKFNLFGKISGWFRSILSDKTSRN). The chain crosses the membrane as a helical span at residues 38–58 (LFFFLCLNLSFAFVELLYGIW). Topologically, residues 59-67 (SNCLGLISD) are lumenal. A helical transmembrane segment spans residues 68–88 (SFHMFFDSTAILAGLAASVIS). Over 89–102 (KWRDNDAFSYGYVR) the chain is Cytoplasmic. A helical transmembrane segment spans residues 103-123 (AEVLAGFVNGLFLIFTAFFIF). Residues 124–140 (SEGVERALAPPDVHHER) lie on the Lumenal side of the membrane. Residues 141-161 (LLLVSILGFVVNLIGIFVFKH) form a helical membrane-spanning segment. The segment at 161-218 (HGGHGHSHGSGHGHSHSLFNGALDQAHGHVDHCHSHEVKHGAAHSHDHAHGHGHFHSH) is his-rich loop. Topologically, residues 162–236 (GGHGHSHGSG…TGPSRQILQG (75 aa)) are cytoplasmic. Residues 194–222 (HSHEVKHGAAHSHDHAHGHGHFHSHDGPS) show a composition bias toward basic and acidic residues. The tract at residues 194-226 (HSHEVKHGAAHSHDHAHGHGHFHSHDGPSLKET) is disordered. A helical transmembrane segment spans residues 237–257 (VFLHILADTLGSIGVIASAIM). Over 258–262 (MQNFG) the chain is Lumenal. A helical transmembrane segment spans residues 263-283 (LMIADPICSILIAILIVVSVI). At 284–376 (PLLRESVGIL…LYVQIDFAAM (93 aa)) the chain is on the cytoplasmic side.

Belongs to the cation diffusion facilitator (CDF) transporter (TC 2.A.4) family. SLC30A subfamily. In terms of assembly, homooligomer. Highly expressed in megakaryocytes and other bone marrow cells and in the epithelium of the small intestine. Expressed in testis (in Leydig cells), adrenal gland (in adrenal medula, zona fasciculata and zona of reticularis), and pituitary gland (in somatotropic cells).

The protein resides in the golgi apparatus membrane. It is found in the cytoplasmic vesicle. Its subcellular location is the golgi apparatus. It localises to the trans-Golgi network. The protein localises to the sarcoplasmic reticulum. The protein resides in the mitochondrion. It catalyses the reaction Zn(2+)(in) = Zn(2+)(out). Zinc ion transporter mediating zinc entry from the cytosol into the lumen of organelles along the secretory pathway. By contributing to zinc ion homeostasis within the early secretory pathway, regulates the activation and folding of enzymes like alkaline phosphatases. The protein is Zinc transporter 7 of Homo sapiens (Human).